Reading from the N-terminus, the 473-residue chain is Trehalose-6-phosphate synthase (473 aa).

Arginine 10 is a binding site for D-glucose 6-phosphate. Residue 21–22 participates in UDP-alpha-D-glucose binding; sequence GG. 2 residues coordinate D-glucose 6-phosphate: tyrosine 76 and aspartate 130. Residues arginine 262 and lysine 267 each contribute to the UDP-alpha-D-glucose site. Position 300 (arginine 300) interacts with D-glucose 6-phosphate. UDP-alpha-D-glucose-binding positions include phenylalanine 339 and 365–369; that span reads LVAKE.

The protein belongs to the glycosyltransferase 20 family. As to quaternary structure, homotetramer.

It catalyses the reaction D-glucose 6-phosphate + UDP-alpha-D-glucose = alpha,alpha-trehalose 6-phosphate + UDP + H(+). The protein operates within glycan biosynthesis; trehalose biosynthesis. Its function is as follows. Probably involved in the osmoprotection via the biosynthesis of trehalose. Catalyzes the transfer of glucose from UDP-alpha-D-glucose (UDP-Glc) to D-glucose 6-phosphate (Glc-6-P) to form trehalose-6-phosphate. Acts with retention of the anomeric configuration of the UDP-sugar donor. This chain is Trehalose-6-phosphate synthase, found in Citrobacter koseri (strain ATCC BAA-895 / CDC 4225-83 / SGSC4696).